A 262-amino-acid chain; its full sequence is Type III pantothenate kinase (262 aa).

6–13 contacts ATP; sequence DVGNTNAV. Substrate is bound by residues tyrosine 100 and 107-110; that span reads GADR. Aspartate 109 (proton acceptor) is an active-site residue. K(+) is bound at residue aspartate 129. An ATP-binding site is contributed by threonine 132. A substrate-binding site is contributed by threonine 184.

This sequence belongs to the type III pantothenate kinase family. In terms of assembly, homodimer. NH4(+) serves as cofactor. Requires K(+) as cofactor.

The protein localises to the cytoplasm. It catalyses the reaction (R)-pantothenate + ATP = (R)-4'-phosphopantothenate + ADP + H(+). The protein operates within cofactor biosynthesis; coenzyme A biosynthesis; CoA from (R)-pantothenate: step 1/5. Functionally, catalyzes the phosphorylation of pantothenate (Pan), the first step in CoA biosynthesis. In Bacillus cytotoxicus (strain DSM 22905 / CIP 110041 / 391-98 / NVH 391-98), this protein is Type III pantothenate kinase.